The following is a 158-amino-acid chain: Endoribonuclease YbeY (158 aa).

Positions 118, 122, and 128 each coordinate Zn(2+).

Belongs to the endoribonuclease YbeY family. It depends on Zn(2+) as a cofactor.

It localises to the cytoplasm. Single strand-specific metallo-endoribonuclease involved in late-stage 70S ribosome quality control and in maturation of the 3' terminus of the 16S rRNA. The chain is Endoribonuclease YbeY from Bartonella bacilliformis (strain ATCC 35685 / KC583 / Herrer 020/F12,63).